Here is a 265-residue protein sequence, read N- to C-terminus: ClpXP adapter protein SpxH (265 aa).

The protein belongs to the SpxH family. In terms of assembly, interacts with Spx.

The protein localises to the cytoplasm. Its function is as follows. Adapter protein required for efficient degradation of Spx by ClpXP under non-stress conditions. Interaction with Spx stabilizes Spx and exposes the C-terminus of Spx for recognition and proteolysis by ClpXP. In Staphylococcus epidermidis (strain ATCC 35984 / DSM 28319 / BCRC 17069 / CCUG 31568 / BM 3577 / RP62A), this protein is ClpXP adapter protein SpxH.